The following is a 446-amino-acid chain: Sensor-type histidine kinase PrrB (446 aa).

The next 2 helical transmembrane spans lie at V19–V39 and L151–F171. An HAMP domain is found at A172–N222. One can recognise a Histidine kinase domain in the interval V237–S446. H240 bears the Phosphohistidine; by autocatalysis mark.

Post-translationally, autophosphorylated.

It localises to the cell membrane. It carries out the reaction ATP + protein L-histidine = ADP + protein N-phospho-L-histidine.. Member of the two-component regulatory system PrrB/PrrA that is involved specifically in early intracellular multiplication of Mycobacterium and is essential for its viability. Functions as a sensor protein kinase which is autophosphorylated at a histidine residue and transfers its phosphate group to the conserved aspartic acid residue in the regulatory domain of PrrA. In turn, PrrA binds to the upstream promoter regions of target genes including itself to positively regulate their expression. The sequence is that of Sensor-type histidine kinase PrrB (prrB) from Mycobacterium leprae (strain TN).